Here is a 342-residue protein sequence, read N- to C-terminus: Anthranilate phosphoribosyltransferase (342 aa).

Residues Gly83, 86 to 87 (GD), Thr91, 93 to 96 (NIST), 111 to 119 (KHGGRSVSS), and Ala123 contribute to the 5-phospho-alpha-D-ribose 1-diphosphate site. Gly83 contributes to the anthranilate binding site. A Mg(2+)-binding site is contributed by Ser95. Arg169 is a binding site for anthranilate. Residues Asp228 and Glu229 each coordinate Mg(2+).

It belongs to the anthranilate phosphoribosyltransferase family. As to quaternary structure, homodimer. Requires Mg(2+) as cofactor.

It carries out the reaction N-(5-phospho-beta-D-ribosyl)anthranilate + diphosphate = 5-phospho-alpha-D-ribose 1-diphosphate + anthranilate. It participates in amino-acid biosynthesis; L-tryptophan biosynthesis; L-tryptophan from chorismate: step 2/5. Its function is as follows. Catalyzes the transfer of the phosphoribosyl group of 5-phosphorylribose-1-pyrophosphate (PRPP) to anthranilate to yield N-(5'-phosphoribosyl)-anthranilate (PRA). The sequence is that of Anthranilate phosphoribosyltransferase from Neisseria gonorrhoeae (strain ATCC 700825 / FA 1090).